We begin with the raw amino-acid sequence, 396 residues long: Pinosylvin synthase 2 (396 aa).

Substrate is bound at residue 60 to 63; it reads KFKR. The active site involves Cys170. Residues Leu273 and 311-313 contribute to the substrate site; that span reads GGR.

This sequence belongs to the thiolase-like superfamily. Chalcone/stilbene synthases family. In terms of assembly, homodimer.

The protein localises to the cytoplasm. The enzyme catalyses (E)-cinnamoyl-CoA + 3 malonyl-CoA + 3 H(+) = (E)-pinosylvin + 4 CO2 + 4 CoA. It carries out the reaction 3-phenylpropanoyl-CoA + 3 malonyl-CoA + 3 H(+) = dihydropinosylvin + 4 CO2 + 4 CoA. It participates in phytoalexin biosynthesis; pinosylvin biosynthesis. Functionally, catalyzes the production of pinosylvin from cinnamoyl-CoA and malonyl-CoA, and dihydropinosylvin from dihydrocinnamoyl-CoA. This Pinus strobus (Eastern white pine) protein is Pinosylvin synthase 2.